The chain runs to 389 residues: MGIKGLMKLLQEEAPSCIKEVEKMSALAGHAVAIDASMALYQFLIAIRSADGGGPSQALTNADGEVTSHLQGMFSRTIRMMENGLKPVYVFDGKPPVMKSGELAKRSDRRQEAQKALEEATEKGNAEDIDRFNKRLVRATPQHNEDCKELLRLMGVPHITAPCEAEASCAALAKGGRVYAAGTEDMDALTFGVPVLYRRLTVSPAKKIPILEIRLERALQELEMTHEQFVDLCILCGCDYCDSIRGVGPKKAYAGIKEHKSIENFLEVLQKNKSKGVVIPDEWLGENPIYKNAREMFIKPEVVDAKETEIKWRDPQETELVDFLVKKHGFQEDRVLSAITRLKKSKSTQSQKRLDSFFTVMPSANGAKKRKAPAAKGGKKAATAKKGKK.

The tract at residues 1-110 (MGIKGLMKLL…GELAKRSDRR (110 aa)) is N-domain. A Mg(2+)-binding site is contributed by Asp-35. Residues Arg-48 and Arg-76 each coordinate DNA. Asp-92 is a Mg(2+) binding site. Residues 103–124 (LAKRSDRRQEAQKALEEATEKG) are disordered. The interval 128–259 (DIDRFNKRLV…KKAYAGIKEH (132 aa)) is I-domain. Glu-164, Glu-166, Asp-185, and Asp-187 together coordinate Mg(2+). Glu-164 contacts DNA. Gly-237 and Asp-239 together coordinate DNA. Asp-239 contributes to the Mg(2+) binding site. The interaction with PCNA stretch occupies residues 350 to 358 (SQKRLDSFF). Residues 362–389 (PSANGAKKRKAPAAKGGKKAATAKKGKK) are disordered. Residues 367–389 (AKKRKAPAAKGGKKAATAKKGKK) show a composition bias toward basic residues.

This sequence belongs to the XPG/RAD2 endonuclease family. FEN1 subfamily. Interacts with PCNA. Three molecules of FEN1 bind to one PCNA trimer with each molecule binding to one PCNA monomer. PCNA stimulates the nuclease activity without altering cleavage specificity. Requires Mg(2+) as cofactor. Post-translationally, phosphorylated. Phosphorylation upon DNA damage induces relocalization to the nuclear plasma.

The protein localises to the nucleus. It localises to the nucleolus. Its subcellular location is the nucleoplasm. The protein resides in the mitochondrion. Functionally, structure-specific nuclease with 5'-flap endonuclease and 5'-3' exonuclease activities involved in DNA replication and repair. During DNA replication, cleaves the 5'-overhanging flap structure that is generated by displacement synthesis when DNA polymerase encounters the 5'-end of a downstream Okazaki fragment. It enters the flap from the 5'-end and then tracks to cleave the flap base, leaving a nick for ligation. Also involved in the long patch base excision repair (LP-BER) pathway, by cleaving within the apurinic/apyrimidinic (AP) site-terminated flap. Acts as a genome stabilization factor that prevents flaps from equilibrating into structures that lead to duplications and deletions. Also possesses 5'-3' exonuclease activity on nicked or gapped double-stranded DNA, and exhibits RNase H activity. Also involved in replication and repair of rDNA and in repairing mitochondrial DNA. This chain is Flap endonuclease 1, found in Phytophthora infestans (strain T30-4) (Potato late blight agent).